The sequence spans 177 residues: Putative peroxiredoxin (177 aa).

The Thioredoxin domain maps to Thr8 to Val177. Cys64 functions as the Cysteine sulfenic acid (-SOH) intermediate in the catalytic mechanism. Positions Thr175–Val177 match the Microbody targeting signal motif.

This sequence belongs to the peroxiredoxin family. Prx5 subfamily. In terms of assembly, homodimer; disulfide-linked, upon oxidation.

It catalyses the reaction a hydroperoxide + [thioredoxin]-dithiol = an alcohol + [thioredoxin]-disulfide + H2O. Functionally, thiol-specific peroxidase that catalyzes the reduction of hydrogen peroxide and organic hydroperoxides to water and alcohols, respectively. Plays a role in cell protection against oxidative stress by detoxifying peroxides and as sensor of hydrogen peroxide-mediated signaling events. In Malassezia furfur (Pityriasis versicolor infection agent), this protein is Putative peroxiredoxin.